The chain runs to 816 residues: uncharacterized protein (816 aa).

503 to 534 is an NADP(+) binding site; it reads DTWTVITGGTDGIGKAYIEELCKTRGLKKFYL. Residue Ser641 participates in substrate binding. Residue Tyr661 is the Proton acceptor of the active site. The next 2 membrane-spanning stretches (helical) occupy residues 743–763 and 777–797; these read FGFS…SIVL and VFII…FLLN.

Belongs to the short-chain dehydrogenases/reductases (SDR) family.

The protein resides in the membrane. This is an uncharacterized protein from Caenorhabditis elegans.